Consider the following 249-residue polypeptide: DNA polymerase sliding clamp (249 aa).

This sequence belongs to the PCNA family. Homotrimer. The subunits circularize to form a toroid; DNA passes through its center. Replication factor C (RFC) is required to load the toroid on the DNA.

Its function is as follows. Sliding clamp subunit that acts as a moving platform for DNA processing. Responsible for tethering the catalytic subunit of DNA polymerase and other proteins to DNA during high-speed replication. This Pyrococcus horikoshii (strain ATCC 700860 / DSM 12428 / JCM 9974 / NBRC 100139 / OT-3) protein is DNA polymerase sliding clamp.